The sequence spans 111 residues: Nascent polypeptide-associated complex protein (111 aa).

The 70-residue stretch at 3-72 folds into the NAC-A/B domain; the sequence is GMNPRQMKKL…EEVREVLEIS (70 aa).

This sequence belongs to the NAC-alpha family. Homodimer. Interacts with the ribosome. Binds ribosomal RNA.

Contacts the emerging nascent chain on the ribosome. The chain is Nascent polypeptide-associated complex protein from Thermococcus kodakarensis (strain ATCC BAA-918 / JCM 12380 / KOD1) (Pyrococcus kodakaraensis (strain KOD1)).